The sequence spans 414 residues: Putative competence-damage inducible protein (414 aa).

This sequence belongs to the CinA family.

This Moorella thermoacetica (strain ATCC 39073 / JCM 9320) protein is Putative competence-damage inducible protein.